Reading from the N-terminus, the 66-residue chain is Large ribosomal subunit protein bL31 (66 aa).

Zn(2+) is bound by residues Cys16, Cys18, Cys36, and Cys39.

This sequence belongs to the bacterial ribosomal protein bL31 family. Type A subfamily. Part of the 50S ribosomal subunit. Requires Zn(2+) as cofactor.

Its function is as follows. Binds the 23S rRNA. The polypeptide is Large ribosomal subunit protein bL31 (Trichlorobacter lovleyi (strain ATCC BAA-1151 / DSM 17278 / SZ) (Geobacter lovleyi)).